The primary structure comprises 216 residues: Thiamine-phosphate synthase (216 aa).

Residues glutamine 39–lysine 43 and asparagine 71 each bind 4-amino-2-methyl-5-(diphosphooxymethyl)pyrimidine. Positions 72 and 91 each coordinate Mg(2+). Serine 109 serves as a coordination point for 4-amino-2-methyl-5-(diphosphooxymethyl)pyrimidine. 2-[(2R,5Z)-2-carboxy-4-methylthiazol-5(2H)-ylidene]ethyl phosphate is bound at residue serine 136–threonine 138. Lysine 139 contacts 4-amino-2-methyl-5-(diphosphooxymethyl)pyrimidine. 2-[(2R,5Z)-2-carboxy-4-methylthiazol-5(2H)-ylidene]ethyl phosphate-binding positions include glycine 172 and isoleucine 192 to threonine 193.

This sequence belongs to the thiamine-phosphate synthase family. Mg(2+) serves as cofactor.

It carries out the reaction 2-[(2R,5Z)-2-carboxy-4-methylthiazol-5(2H)-ylidene]ethyl phosphate + 4-amino-2-methyl-5-(diphosphooxymethyl)pyrimidine + 2 H(+) = thiamine phosphate + CO2 + diphosphate. The enzyme catalyses 2-(2-carboxy-4-methylthiazol-5-yl)ethyl phosphate + 4-amino-2-methyl-5-(diphosphooxymethyl)pyrimidine + 2 H(+) = thiamine phosphate + CO2 + diphosphate. It catalyses the reaction 4-methyl-5-(2-phosphooxyethyl)-thiazole + 4-amino-2-methyl-5-(diphosphooxymethyl)pyrimidine + H(+) = thiamine phosphate + diphosphate. Its pathway is cofactor biosynthesis; thiamine diphosphate biosynthesis; thiamine phosphate from 4-amino-2-methyl-5-diphosphomethylpyrimidine and 4-methyl-5-(2-phosphoethyl)-thiazole: step 1/1. Its function is as follows. Condenses 4-methyl-5-(beta-hydroxyethyl)thiazole monophosphate (THZ-P) and 2-methyl-4-amino-5-hydroxymethyl pyrimidine pyrophosphate (HMP-PP) to form thiamine monophosphate (TMP). This is Thiamine-phosphate synthase from Bordetella avium (strain 197N).